The sequence spans 967 residues: Putative helicase MOV-10 (967 aa).

The disordered stretch occupies residues 85-117 (ADQYRRPRTDTEVSAPAPGQQPSSGPPAPQSRA). A compositionally biased stretch (low complexity) spans 98-107 (SAPAPGQQPS). 516-523 (GPPGTGKT) contributes to the ATP binding site. The DEAG box motif lies at 638 to 641 (DECG).

This sequence belongs to the DNA2/NAM7 helicase family. SDE3 subfamily.

It is found in the cytoplasm. The protein resides in the P-body. It localises to the cytoplasmic ribonucleoprotein granule. Its subcellular location is the stress granule. The protein localises to the nucleus. It catalyses the reaction ATP + H2O = ADP + phosphate + H(+). 5' to 3' RNA helicase that is involved in a number of cellular roles ranging from mRNA metabolism and translation, modulation of viral infectivity, inhibition of retrotransposition, or regulation of synaptic transmission. Plays an important role in innate antiviral immunity by promoting type I interferon production. Required for microRNA (miRNA)-mediated gene silencing by the RNA-induced silencing complex (RISC). Required for both miRNA-mediated translational repression and miRNA-mediated cleavage of complementary mRNAs by RISC. In cooperation with FMR1, regulates miRNA-mediated translational repression by AGO2. Restricts retrotransposition of long interspersed element-1 (LINE-1). Required for embryonic viability and for normal central nervous system development and function. May function as a messenger ribonucleoprotein (mRNP) clearance factor. This chain is Putative helicase MOV-10 (MOV10), found in Gallus gallus (Chicken).